The sequence spans 426 residues: Dihydroorotase (426 aa).

2 residues coordinate Zn(2+): histidine 58 and histidine 60. Residues 60–62 and asparagine 92 each bind substrate; that span reads HLR. Residues aspartate 150, histidine 177, and histidine 230 each coordinate Zn(2+). Residue asparagine 276 participates in substrate binding. Residue aspartate 303 coordinates Zn(2+). The active site involves aspartate 303. Substrate contacts are provided by residues histidine 307 and 321–322; that span reads FG.

The protein belongs to the metallo-dependent hydrolases superfamily. DHOase family. Class I DHOase subfamily. It depends on Zn(2+) as a cofactor.

The enzyme catalyses (S)-dihydroorotate + H2O = N-carbamoyl-L-aspartate + H(+). It functions in the pathway pyrimidine metabolism; UMP biosynthesis via de novo pathway; (S)-dihydroorotate from bicarbonate: step 3/3. Its function is as follows. Catalyzes the reversible cyclization of carbamoyl aspartate to dihydroorotate. The chain is Dihydroorotase from Listeria monocytogenes serovar 1/2a (strain ATCC BAA-679 / EGD-e).